Reading from the N-terminus, the 598-residue chain is Elongation factor 4 (598 aa).

The region spanning 2–184 is the tr-type G domain; the sequence is QHIRNFSIIA…TVVRRVPPPK (183 aa). GTP is bound by residues 14–19 and 131–134; these read DHGKST and NKID.

It belongs to the TRAFAC class translation factor GTPase superfamily. Classic translation factor GTPase family. LepA subfamily.

It is found in the cell inner membrane. The catalysed reaction is GTP + H2O = GDP + phosphate + H(+). In terms of biological role, required for accurate and efficient protein synthesis under certain stress conditions. May act as a fidelity factor of the translation reaction, by catalyzing a one-codon backward translocation of tRNAs on improperly translocated ribosomes. Back-translocation proceeds from a post-translocation (POST) complex to a pre-translocation (PRE) complex, thus giving elongation factor G a second chance to translocate the tRNAs correctly. Binds to ribosomes in a GTP-dependent manner. The polypeptide is Elongation factor 4 (Aromatoleum aromaticum (strain DSM 19018 / LMG 30748 / EbN1) (Azoarcus sp. (strain EbN1))).